The following is a 431-amino-acid chain: Acrosin (431 aa).

Positions 1–16 (MLPTAVLLVLVVSVVA) are cleaved as a signal peptide. Residue Asn19 is glycosylated (N-linked (GlcNAc...) asparagine). 6 disulfide bridges follow: Cys22–Cys152, Cys26–Cys160, Cys71–Cys87, Cys175–Cys244, Cys207–Cys223, and Cys234–Cys264. Residues 40–288 (VVGGQAAQQG…FLDWIASRIG (249 aa)) enclose the Peptidase S1 domain. Residues His86 and Asp140 each act as charge relay system in the active site. The N-linked (GlcNAc...) asparagine glycan is linked to Asn208. The active-site Charge relay system is the Ser238. A disordered region spans residues 295 to 385 (IQPATPTPPT…PPPASTKPPQ (91 aa)). The span at 331-341 (PHPHPHPHPHP) shows a compositional bias: basic residues. Over residues 342–381 (RPPQPPAAQAPPPPPPPPPPPPPPPPPPPPPPPPPPPAST) the composition is skewed to pro residues. The propeptide at 351–431 (APPPPPPPPP…TEIPEVTLAS (81 aa)) is pro-rich.

The protein belongs to the peptidase S1 family. As to quaternary structure, heavy chain (catalytic) and a light chain linked by two disulfide bonds. Forms a heterodimer with SERPINA5.

It carries out the reaction Preferential cleavage: Arg-|-Xaa, Lys-|-Xaa.. Inhibited by SERPINA5. Its function is as follows. Acrosin is the major protease of mammalian spermatozoa. It is a serine protease of trypsin-like cleavage specificity, it is synthesized in a zymogen form, proacrosin and stored in the acrosome. In Oryctolagus cuniculus (Rabbit), this protein is Acrosin (ACR).